Here is a 283-residue protein sequence, read N- to C-terminus: Foldase protein PrsA 3 (283 aa).

Residues 1–21 (MKKKKIFIGTIISCVMLALSA) form the signal peptide. C22 carries N-palmitoyl cysteine lipidation. A lipid anchor (S-diacylglycerol cysteine) is attached at C22. In terms of domain architecture, PpiC spans 132–222 (KPEMKVSHIL…YGYHIIKVTD (91 aa)).

The protein belongs to the PrsA family.

It is found in the cell membrane. It carries out the reaction [protein]-peptidylproline (omega=180) = [protein]-peptidylproline (omega=0). Its function is as follows. Plays a major role in protein secretion by helping the post-translocational extracellular folding of several secreted proteins. This Bacillus cereus (strain ATCC 14579 / DSM 31 / CCUG 7414 / JCM 2152 / NBRC 15305 / NCIMB 9373 / NCTC 2599 / NRRL B-3711) protein is Foldase protein PrsA 3 (prsA3).